A 142-amino-acid polypeptide reads, in one-letter code: Galectin-16 (142 aa).

Residues 6-138 (VPYKLPVSLS…DVSLDSVLVN (133 aa)) enclose the Galectin domain.

In terms of tissue distribution, predominantly and highly expressed in the placenta where it is localized mainly in the syncytiotrophoblast and in the endothelia of fetal vessels. Also detected in the amnion and chorionic trophoblasts in fetal membranes.

Its function is as follows. Binds lactose with high affinity. Strong inducer of T-cell apoptosis. The chain is Galectin-16 from Homo sapiens (Human).